A 287-amino-acid polypeptide reads, in one-letter code: Phosphatidylserine decarboxylase proenzyme (287 aa).

Active-site charge relay system; for autoendoproteolytic cleavage activity residues include Asp-90, His-147, and Ser-252. The active-site Schiff-base intermediate with substrate; via pyruvic acid; for decarboxylase activity is the Ser-252. At Ser-252 the chain carries Pyruvic acid (Ser); by autocatalysis.

This sequence belongs to the phosphatidylserine decarboxylase family. PSD-B subfamily. Prokaryotic type I sub-subfamily. Heterodimer of a large membrane-associated beta subunit and a small pyruvoyl-containing alpha subunit. Pyruvate is required as a cofactor. In terms of processing, is synthesized initially as an inactive proenzyme. Formation of the active enzyme involves a self-maturation process in which the active site pyruvoyl group is generated from an internal serine residue via an autocatalytic post-translational modification. Two non-identical subunits are generated from the proenzyme in this reaction, and the pyruvate is formed at the N-terminus of the alpha chain, which is derived from the carboxyl end of the proenzyme. The autoendoproteolytic cleavage occurs by a canonical serine protease mechanism, in which the side chain hydroxyl group of the serine supplies its oxygen atom to form the C-terminus of the beta chain, while the remainder of the serine residue undergoes an oxidative deamination to produce ammonia and the pyruvoyl prosthetic group on the alpha chain. During this reaction, the Ser that is part of the protease active site of the proenzyme becomes the pyruvoyl prosthetic group, which constitutes an essential element of the active site of the mature decarboxylase.

It is found in the cell membrane. The enzyme catalyses a 1,2-diacyl-sn-glycero-3-phospho-L-serine + H(+) = a 1,2-diacyl-sn-glycero-3-phosphoethanolamine + CO2. The protein operates within phospholipid metabolism; phosphatidylethanolamine biosynthesis; phosphatidylethanolamine from CDP-diacylglycerol: step 2/2. Catalyzes the formation of phosphatidylethanolamine (PtdEtn) from phosphatidylserine (PtdSer). In Pseudomonas putida (strain ATCC 47054 / DSM 6125 / CFBP 8728 / NCIMB 11950 / KT2440), this protein is Phosphatidylserine decarboxylase proenzyme.